The following is a 394-amino-acid chain: Argininosuccinate synthase (394 aa).

Residues 7-15 (AYSGGLDTS) and A34 each bind ATP. 2 residues coordinate L-citrulline: Y85 and S90. Residue G115 participates in ATP binding. T117, N121, and D122 together coordinate L-aspartate. Residue N121 participates in L-citrulline binding. L-citrulline is bound by residues R125, S176, S185, E261, and Y273.

This sequence belongs to the argininosuccinate synthase family. Type 1 subfamily. As to quaternary structure, homotetramer.

The protein resides in the cytoplasm. It carries out the reaction L-citrulline + L-aspartate + ATP = 2-(N(omega)-L-arginino)succinate + AMP + diphosphate + H(+). The protein operates within amino-acid biosynthesis; L-arginine biosynthesis; L-arginine from L-ornithine and carbamoyl phosphate: step 2/3. This is Argininosuccinate synthase from Ehrlichia ruminantium (strain Gardel).